The chain runs to 277 residues: Shikimate dehydrogenase (NADP(+)) (277 aa).

Residues 17–19 (SRS) and threonine 64 contribute to the shikimate site. The Proton acceptor role is filled by lysine 68. Asparagine 88 and aspartate 103 together coordinate shikimate. Residues 128–132 (GAGGS), 152–157 (NRTLDR), and leucine 217 contribute to the NADP(+) site. Tyrosine 219 serves as a coordination point for shikimate. An NADP(+)-binding site is contributed by glycine 240.

It belongs to the shikimate dehydrogenase family. In terms of assembly, homodimer.

It catalyses the reaction shikimate + NADP(+) = 3-dehydroshikimate + NADPH + H(+). It functions in the pathway metabolic intermediate biosynthesis; chorismate biosynthesis; chorismate from D-erythrose 4-phosphate and phosphoenolpyruvate: step 4/7. Functionally, involved in the biosynthesis of the chorismate, which leads to the biosynthesis of aromatic amino acids. Catalyzes the reversible NADPH linked reduction of 3-dehydroshikimate (DHSA) to yield shikimate (SA). The protein is Shikimate dehydrogenase (NADP(+)) of Rhodopseudomonas palustris (strain BisB18).